The primary structure comprises 282 residues: Glycine betaine/carnitine transport permease protein GbuB (282 aa).

6 consecutive transmembrane segments (helical) span residues 44-64 (VFDLVPPWLFIILLVFGTFWV), 70-90 (KWGLIIFEVVGLLLIWNLDFW), 99-119 (LVLTSSLIALVIGVPLGIWMA), 140-160 (AFVYLIPAVAFFGIGMVPGVV), 220-240 (IMLALSMVVIASMIGAMGLGT), and 251-271 (AGGGFVAGIAIVIVAIILDRL). Residues 93–272 (MTQTLTLVLT…IVAIILDRLT (180 aa)) form the ABC transmembrane type-1 domain.

This sequence belongs to the binding-protein-dependent transport system permease family. The complex is composed of two ATP-binding proteins (GbuA), two transmembrane proteins (GbuB) and a solute-binding protein (GbuC).

It localises to the cell membrane. With respect to regulation, the complex is activated by an osmotic gradient or by low temperature. Functionally, part of the ABC transporter complex GbuABC involved in glycine betaine uptake. Responsible for the translocation of the substrate across the membrane. Involved, with BetL and OpuC, in osmoprotection and cryoprotection of Listeria. Can also uptake carnitine when carnitine is abundant in the growth medium. The protein is Glycine betaine/carnitine transport permease protein GbuB (gbuB) of Listeria monocytogenes serotype 1/2a (strain 10403S).